Reading from the N-terminus, the 1152-residue chain is Syntaxin-binding protein 5 (1152 aa).

Positions 14–35 are disordered; that stretch reads TAGSSSASQQQQQQQHPPGNRE. Residues 17-28 show a composition bias toward low complexity; that stretch reads SSSASQQQQQQQ. WD repeat units lie at residues 62–95, 102–141, 146–182, 201–235, 241–273, 295–337, 345–379, 401–478, 506–620, and 634–696; these read SALAFDPVQKILAVGTQTGALRLFGRPGVECYCQ, VIQLQFLINEGALVSALADDTLHLWNLRQKRPAVLHSLKF, VTFCHLPFQSKWLYVGTERGNIHIVNVESFTLSGYVI, HISDNPMDEGKLLIGFESGTVVLWDLKSKKADYRY, IHSVAWHHEGKQFICSHSDGTLTIWNVRSPAKP, PILK…KSTA, IVDFLTLCETPYPNDFQEPYAVVVLLEKDLVLIDL, TCCE…YKLK, QIIS…ELVI, and TSLA…SGAG. Disordered stretches follow at residues 555–596 and 675–731; these read VDTP…GLRD and SNDP…QKVN. Residue serine 693 is modified to Phosphoserine. Positions 713–722 are enriched in low complexity; the sequence is SPTSGSSSPH. Residues serine 724 and serine 760 each carry the phosphoserine modification. Threonine 763 is subject to Phosphothreonine. A Phosphoserine modification is found at serine 783. Residue threonine 785 is modified to Phosphothreonine. A Phosphoserine modification is found at serine 786. WD repeat units lie at residues 795–852, 861–935, 940–984, and 998–1021; these read ISAL…SGTI, RMAF…QSCA, ITET…LDVY, and CFANNGQALYLVSPTEIQRLTYSQ. Residues 883–893 show a composition bias toward basic and acidic residues; it reads NVAEEKDEKEK. The tract at residues 883-907 is disordered; it reads NVAEEKDEKEKLKKRRPVSVSPSSS. 2 positions are modified to phosphoserine: serine 901 and serine 903. At threonine 1040 the chain carries Phosphothreonine. Phosphoserine is present on residues serine 1059 and serine 1132. Positions 1087–1147 constitute a v-SNARE coiled-coil homology domain; it reads GIEGVKGAAS…HEMMLKYKDK (61 aa).

Belongs to the WD repeat L(2)GL family. In terms of assembly, part of a complex that contains STX1, STXBP5, SNAP25 and SYT1. Interacts with STX1A and STX4A via its v-SNARE homology domain. Part of a complex that contains STXBP5, STX4A and SNAP23. Detected in heart, spleen, lung, skeletal muscle, liver and kidney (at protein level). Detected in brain, particularly in the olfactory bulb and in hippocampus. Detected in the tenia tecta and in the piriform layer of the brain cortex.

Its subcellular location is the cytoplasm. The protein localises to the cell membrane. It localises to the membrane. Functionally, plays a regulatory role in calcium-dependent exocytosis and neurotransmitter release. Inhibits membrane fusion between transport vesicles and the plasma membrane. May modulate the assembly of trans-SNARE complexes between transport vesicles and the plasma membrane. Competes with STXBP1 for STX1 binding. Inhibits translocation of GLUT4 from intracellular vesicles to the plasma membrane. This Mus musculus (Mouse) protein is Syntaxin-binding protein 5 (Stxbp5).